A 325-amino-acid polypeptide reads, in one-letter code: Phospho-N-acetylmuramoyl-pentapeptide-transferase (325 aa).

10 consecutive transmembrane segments (helical) span residues 9–29 (ALLV…PWLL), 53–73 (TMGG…FQAF), 77–97 (TLLL…DDYL), 112–132 (KLLG…AFLG), 154–174 (LGNV…ANAV), 182–202 (GLCS…SLAL), 204–224 (EKGL…FLVY), 231–251 (VFMG…FAVL), 257–277 (FLLL…IQVI), and 305–325 (KIVL…GYGL).

Belongs to the glycosyltransferase 4 family. MraY subfamily. It depends on Mg(2+) as a cofactor.

It is found in the cell membrane. It catalyses the reaction UDP-N-acetyl-alpha-D-muramoyl-L-alanyl-gamma-D-glutamyl-meso-2,6-diaminopimeloyl-D-alanyl-D-alanine + di-trans,octa-cis-undecaprenyl phosphate = di-trans,octa-cis-undecaprenyl diphospho-N-acetyl-alpha-D-muramoyl-L-alanyl-D-glutamyl-meso-2,6-diaminopimeloyl-D-alanyl-D-alanine + UMP. Its pathway is cell wall biogenesis; peptidoglycan biosynthesis. Catalyzes the initial step of the lipid cycle reactions in the biosynthesis of the cell wall peptidoglycan: transfers peptidoglycan precursor phospho-MurNAc-pentapeptide from UDP-MurNAc-pentapeptide onto the lipid carrier undecaprenyl phosphate, yielding undecaprenyl-pyrophosphoryl-MurNAc-pentapeptide, known as lipid I. This chain is Phospho-N-acetylmuramoyl-pentapeptide-transferase, found in Carboxydothermus hydrogenoformans (strain ATCC BAA-161 / DSM 6008 / Z-2901).